A 628-amino-acid polypeptide reads, in one-letter code: Beta-galactosidase large subunit (628 aa).

E468 acts as the Proton donor in catalysis. E536 serves as the catalytic Nucleophile.

It belongs to the glycosyl hydrolase 2 family. As to quaternary structure, heterodimer of a large (LacL) and a small subunit (LacM).

It carries out the reaction Hydrolysis of terminal non-reducing beta-D-galactose residues in beta-D-galactosides.. Component of a beta-galactosidase. The polypeptide is Beta-galactosidase large subunit (lacL) (Lactobacillus acidophilus (strain ATCC 700396 / NCK56 / N2 / NCFM)).